The following is a 291-amino-acid chain: tRNA U34 carboxymethyltransferase (291 aa).

Residues Lys61, Trp75, Lys80, Gly100, 122–124, 149–150, Tyr169, and Arg284 contribute to the carboxy-S-adenosyl-L-methionine site; these read DPS and VE.

Belongs to the class I-like SAM-binding methyltransferase superfamily. CmoB family. Homotetramer.

It carries out the reaction carboxy-S-adenosyl-L-methionine + 5-hydroxyuridine(34) in tRNA = 5-carboxymethoxyuridine(34) in tRNA + S-adenosyl-L-homocysteine + H(+). Its function is as follows. Catalyzes carboxymethyl transfer from carboxy-S-adenosyl-L-methionine (Cx-SAM) to 5-hydroxyuridine (ho5U) to form 5-carboxymethoxyuridine (cmo5U) at position 34 in tRNAs. This is tRNA U34 carboxymethyltransferase from Campylobacter jejuni subsp. doylei (strain ATCC BAA-1458 / RM4099 / 269.97).